Here is a 171-residue protein sequence, read N- to C-terminus: Peptide deformylase (171 aa).

The Fe cation site is built by Cys91 and His133. The active site involves Glu134. His137 contacts Fe cation.

This sequence belongs to the polypeptide deformylase family. Fe(2+) serves as cofactor.

It catalyses the reaction N-terminal N-formyl-L-methionyl-[peptide] + H2O = N-terminal L-methionyl-[peptide] + formate. In terms of biological role, removes the formyl group from the N-terminal Met of newly synthesized proteins. Requires at least a dipeptide for an efficient rate of reaction. N-terminal L-methionine is a prerequisite for activity but the enzyme has broad specificity at other positions. The protein is Peptide deformylase of Haemophilus ducreyi (strain 35000HP / ATCC 700724).